We begin with the raw amino-acid sequence, 99 residues long: Acylphosphatase-1 (99 aa).

Ala2 bears the N-acetylalanine mark. Residues 9–99 form the Acylphosphatase-like domain; it reads SVDYEVSGRV…LEHTDFQIRK (91 aa). Active-site residues include Arg24 and Asn42.

This sequence belongs to the acylphosphatase family. As to expression, organ-common type isozyme is found in many different tissues.

The enzyme catalyses an acyl phosphate + H2O = a carboxylate + phosphate + H(+). In Gallus gallus (Chicken), this protein is Acylphosphatase-1 (ACYP1).